A 431-amino-acid polypeptide reads, in one-letter code: MGKNVVVLGTQWGDEGKGKIVDLLTEQAKYVVRYQGGHNAGHTLVIDGDKTVLHLIPSGILRDNVKCIIGNGVVLAPDALMTEINMLKERGVPVEERLLISEACPLILPFHCALDMAREKARGNKAIGTTGRGIGPAYEDKVSRRGLRVGDLFNAELFAEKLKEVMAYHNFMLTEYYKCEAVDYEETLKDALAIADYLKSMCTDVSELLDQARKAGEPILFEGAQGTLLDIDHGTYPFVTSSNTTAGGVATGSGFGPRHLDYVLGIMKAYTTRVGAGPFPTELENEIGDYLGTKGHEFGATTGRKRRPGWLDIVAMKRAVQINSVSGFCLTKLDVLDGLEEVKICVGYQYPDGTVATTTPLAAEGYEQVTPVLETMPGWSETTFGATSVEQLPQAAMNYIKRLEELLETPIDIISTGPDRNETMILVNPFS.

GTP contacts are provided by residues 13–19 (GDEGKGK) and 41–43 (GHT). D14 functions as the Proton acceptor in the catalytic mechanism. Mg(2+) contacts are provided by D14 and G41. IMP contacts are provided by residues 14–17 (DEGK), 39–42 (NAGH), T130, R144, Q225, T240, and R304. H42 acts as the Proton donor in catalysis. Residue 300 to 306 (ATTGRKR) coordinates substrate. GTP contacts are provided by residues R306, 332–334 (KLD), and 415–417 (STG).

The protein belongs to the adenylosuccinate synthetase family. Homodimer. Mg(2+) is required as a cofactor.

Its subcellular location is the cytoplasm. The enzyme catalyses IMP + L-aspartate + GTP = N(6)-(1,2-dicarboxyethyl)-AMP + GDP + phosphate + 2 H(+). The protein operates within purine metabolism; AMP biosynthesis via de novo pathway; AMP from IMP: step 1/2. Functionally, plays an important role in the de novo pathway of purine nucleotide biosynthesis. Catalyzes the first committed step in the biosynthesis of AMP from IMP. This Shewanella piezotolerans (strain WP3 / JCM 13877) protein is Adenylosuccinate synthetase.